Consider the following 272-residue polypeptide: Ethanolamine ammonia-lyase small subunit (272 aa).

Residues valine 161, glutamate 182, and cysteine 211 each contribute to the adenosylcob(III)alamin site.

This sequence belongs to the EutC family. As to quaternary structure, the basic unit is a heterodimer which dimerizes to form tetramers. The heterotetramers trimerize; 6 large subunits form a core ring with 6 small subunits projecting outwards. Adenosylcob(III)alamin is required as a cofactor.

The protein localises to the bacterial microcompartment. The catalysed reaction is ethanolamine = acetaldehyde + NH4(+). It functions in the pathway amine and polyamine degradation; ethanolamine degradation. In terms of biological role, catalyzes the deamination of various vicinal amino-alcohols to oxo compounds. Allows this organism to utilize ethanolamine as the sole source of nitrogen and carbon in the presence of external vitamin B12. In Xanthomonas campestris pv. campestris (strain B100), this protein is Ethanolamine ammonia-lyase small subunit.